Here is a 147-residue protein sequence, read N- to C-terminus: Protein PBDC1 homolog (147 aa).

The protein belongs to the PBDC1 family.

Its subcellular location is the cytoplasm. The protein localises to the nucleus. The chain is Protein PBDC1 homolog from Schizosaccharomyces pombe (strain 972 / ATCC 24843) (Fission yeast).